Here is a 647-residue protein sequence, read N- to C-terminus: 2',3'-cyclic-nucleotide 2'-phosphodiesterase/3'-nucleotidase (647 aa).

Residues 1–19 (MIKFSATLLATLIAASVNA) form the signal peptide. Residues Asp-31, His-33, Asp-76, Asn-116, His-225, His-257, and His-259 each contribute to the a divalent metal cation site. Substrate contacts are provided by residues Tyr-440 and 544 to 550 (YRAYGGK).

It belongs to the 5'-nucleotidase family. The cofactor is a divalent metal cation.

It is found in the periplasm. The enzyme catalyses a nucleoside 2',3'-cyclic phosphate + H2O = a nucleoside 3'-phosphate + H(+). The catalysed reaction is a ribonucleoside 3'-phosphate + H2O = a ribonucleoside + phosphate. This bifunctional enzyme catalyzes two consecutive reactions during ribonucleic acid degradation. Converts a 2',3'-cyclic nucleotide to a 3'-nucleotide and then the 3'-nucleotide to the corresponding nucleoside and phosphate. This Salmonella typhimurium (strain LT2 / SGSC1412 / ATCC 700720) protein is 2',3'-cyclic-nucleotide 2'-phosphodiesterase/3'-nucleotidase (cpdB).